The primary structure comprises 864 residues: DNA mismatch repair protein MutS (864 aa).

607–614 (GPNMGGKS) provides a ligand contact to ATP.

Belongs to the DNA mismatch repair MutS family.

Functionally, this protein is involved in the repair of mismatches in DNA. It is possible that it carries out the mismatch recognition step. This protein has a weak ATPase activity. This Neisseria meningitidis serogroup B (strain ATCC BAA-335 / MC58) protein is DNA mismatch repair protein MutS.